The sequence spans 257 residues: Large ribosomal subunit protein uL2 (257 aa).

Residues V207 to N257 are disordered.

It belongs to the universal ribosomal protein uL2 family. Component of the large ribosomal subunit.

The protein localises to the cytoplasm. In terms of biological role, component of the large ribosomal subunit. The ribosome is a large ribonucleoprotein complex responsible for the synthesis of proteins in the cell. The sequence is that of Large ribosomal subunit protein uL2 (RPL8) from Entamoeba histolytica (strain ATCC 30459 / HM-1:IMSS / ABRM).